Reading from the N-terminus, the 275-residue chain is Expansin-A23 (275 aa).

Positions 1 to 27 (MNLLGKMIYVEGFMMIMATLLVSMSYG) are cleaved as a signal peptide. In terms of domain architecture, Expansin-like EG45 spans 72 to 182 (QGACGYGDLF…RRISCARTGG (111 aa)). Positions 192-271 (YFLMILPYNV…NWGFGQTFDG (80 aa)) constitute an Expansin-like CBD domain.

This sequence belongs to the expansin family. Expansin A subfamily.

The protein resides in the secreted. It localises to the cell wall. It is found in the membrane. Functionally, causes loosening and extension of plant cell walls by disrupting non-covalent bonding between cellulose microfibrils and matrix glucans. No enzymatic activity has been found. The chain is Expansin-A23 (EXPA23) from Arabidopsis thaliana (Mouse-ear cress).